The chain runs to 339 residues: MSRITLAELAEKLDATVHGDGTVVVHSIASMSKAKEGDITFLSDAKYRKHLVECQASAVIVKEADVEFCQSNVLIMRDPYLGFALAAQALDTTPAPASDIAPSAYIADDAIIGEGVAIGHNAVIESKAVIADGAMIGAGCFIGKEAKIGKNTKLWANVSVYHRVEIGEACLVQSGTVIGSDGFGYANDRGTWVKIPQLGSVIIGDNVEIGANTTIDRGAIDDTVIESNVIIDNQIQIAHNVQIGSGSAMAGGTIVAGSTKIGKHCIIGGGSVINGHIEITDGVTITGMGMVMRAIDEKGMYSSGIPLQTNKEWRKTAARVHKIDEMNKRLKAVEKKLVD.

Catalysis depends on His-239, which acts as the Proton acceptor.

It belongs to the transferase hexapeptide repeat family. LpxD subfamily. In terms of assembly, homotrimer.

The catalysed reaction is a UDP-3-O-[(3R)-3-hydroxyacyl]-alpha-D-glucosamine + a (3R)-hydroxyacyl-[ACP] = a UDP-2-N,3-O-bis[(3R)-3-hydroxyacyl]-alpha-D-glucosamine + holo-[ACP] + H(+). The protein operates within bacterial outer membrane biogenesis; LPS lipid A biosynthesis. Catalyzes the N-acylation of UDP-3-O-acylglucosamine using 3-hydroxyacyl-ACP as the acyl donor. Is involved in the biosynthesis of lipid A, a phosphorylated glycolipid that anchors the lipopolysaccharide to the outer membrane of the cell. In Aliivibrio fischeri (strain ATCC 700601 / ES114) (Vibrio fischeri), this protein is UDP-3-O-acylglucosamine N-acyltransferase.